Here is a 143-residue protein sequence, read N- to C-terminus: Ninjurin-2 (143 aa).

Topologically, residues 1–61 are extracellular; it reads MESDRETIHL…KSVLQQGPFA (61 aa). The interval 26-38 is helix alpha1; sequence NFYATKKSVAESM. Residues 39–58 are helix alpha2; that stretch reads LDVALFMSNAMRLKSVLQQG. The helical transmembrane segment at 62–93 threads the bilayer; sequence EYYTTLVTLIIVSLLLQVVISLLLVFIAILNL. The Cytoplasmic segment spans residues 94–97; the sequence is NEVE. The chain crosses the membrane as a helical span at residues 98–127; sequence NQRHLNKLNNAATILVFITVVINIFITAFG. K104 provides a ligand contact to cholesterol. Topologically, residues 128–143 are extracellular; sequence AHHAASMAARTSSNPI.

It belongs to the ninjurin family. As to quaternary structure, homooligomer; in response to stimuli, homooligomerizes into filaments. In contrast to NINJ1, the filament is curved toward the intracellular space, preventing its circularization on a relatively flat membrane to mediate plasma membrane rupture: curvature is caused by cholesterol-binding at the cytoplasmic leaflet.

Its subcellular location is the cell membrane. Its role in unclear. In contrast to NINJ1 paralog, does not mediate plasma membrane rupture (cytolysis) downstream of necroptotic and pyroptotic programmed cell death. While it is able to oligomerize and form filaments, filaments are curved toward the intracellular space, preventing circularization to mediate plasma membrane rupture. May act as a homophilic transmembrane adhesion molecule involved in nerve regeneration. Promotes axonal growth. This is Ninjurin-2 (Ninj2) from Mus musculus (Mouse).